The primary structure comprises 209 residues: Ubiquitin-conjugating enzyme E2 S (209 aa).

The 147-residue stretch at glutamine 14–glutamine 160 folds into the UBC core domain. Cysteine 98 (glycyl thioester intermediate) is an active-site residue. Residues alanine 168–lysine 194 form a disordered region. Over residues alanine 184–lysine 194 the composition is skewed to basic and acidic residues.

It belongs to the ubiquitin-conjugating enzyme family.

The enzyme catalyses S-ubiquitinyl-[E1 ubiquitin-activating enzyme]-L-cysteine + [E2 ubiquitin-conjugating enzyme]-L-cysteine = [E1 ubiquitin-activating enzyme]-L-cysteine + S-ubiquitinyl-[E2 ubiquitin-conjugating enzyme]-L-cysteine.. It functions in the pathway protein modification; protein ubiquitination. Functionally, catalyzes the covalent attachment of ubiquitin to other proteins. Acts as an essential factor of the anaphase promoting complex/cyclosome (APC/C), a cell cycle-regulated ubiquitin ligase that controls progression through mitosis. Acts by specifically elongating polyubiquitin chains initiated by the E2 enzyme vih/UbcH10 on APC/C substrates, enhancing the degradation of APC/C substrates by the proteasome and promoting mitotic exit. The polypeptide is Ubiquitin-conjugating enzyme E2 S (Drosophila melanogaster (Fruit fly)).